The following is a 166-amino-acid chain: Protein UTR5 (166 aa).

The protein is Protein UTR5 (UTR5) of Saccharomyces cerevisiae (strain ATCC 204508 / S288c) (Baker's yeast).